A 317-amino-acid chain; its full sequence is uncharacterized protein (317 aa).

Helical transmembrane passes span Ile24–Met44, Leu63–Ala83, Leu136–Asp156, Leu187–Phe207, Ile229–Leu249, Gly252–Ser272, and Ile295–Leu315.

The protein to M.jannaschii MJ0880, MJ1556 and MJ1589.

Its subcellular location is the cell membrane. This is an uncharacterized protein from Methanocaldococcus jannaschii (strain ATCC 43067 / DSM 2661 / JAL-1 / JCM 10045 / NBRC 100440) (Methanococcus jannaschii).